The following is a 334-amino-acid chain: Ficolin-1 (334 aa).

The first 17 residues, 1-17 (MQWPTLWAFSGLLCLCP), serve as a signal peptide directing secretion. Residues 47 to 117 (SCPGFPGPPG…SLGEKELGDT (71 aa)) are disordered. Residues 50 to 88 (GFPGPPGPKGEPGSPAGRGERGFQGSPGKMGPAGSKGEP) enclose the Collagen-like domain. The 218-residue stretch at 117-334 (TLCQRGPRSC…KVAEMKIRAS (218 aa)) folds into the Fibrinogen C-terminal domain. 2 disulfide bridges follow: cysteine 119/cysteine 147 and cysteine 126/cysteine 154. An a domain; contributes to trimerization region spans residues 123-162 (PRSCKDLLTRGIFLTGWYTIHLPDCRPLTVLCDMDVDGGG). The interval 163-251 (WTVFQRRVDG…LTLGQFLEGT (89 aa)) is b domain; contributes to trimerization. N-linked (GlcNAc...) asparagine glycosylation occurs at asparagine 261. Positions 270 and 272 each coordinate Ca(2+). A disulfide bridge links cysteine 278 with cysteine 291. A carbohydrate is bound at residue 290–292 (NCH). Residues 325–334 (KVAEMKIRAS) form a p domain region.

It belongs to the ficolin lectin family. Homotrimer. Interacts with elastin/ELN. Interacts (via Fibrinogen C-terminal domain) with FFAR2. Interacts with CRP; may regulate monocyte activation by FCN1. In terms of tissue distribution, highly expressed in liver and spleen.

Its subcellular location is the secreted. The protein localises to the cell membrane. Extracellular lectin functioning as a pattern-recognition receptor in innate immunity. Binds the sugar moieties of pathogen-associated molecular patterns (PAMPs) displayed on microbes and activates the lectin pathway of the complement system. May also activate monocytes through a G protein-coupled receptor, FFAR2, inducing the secretion of interleukin-8/IL-8. Binds preferentially to 9-O-acetylated 2-6-linked sialic acid derivatives and to various glycans containing sialic acid engaged in a 2-3 linkage. The chain is Ficolin-1 (Fcn1) from Mus musculus (Mouse).